Here is a 200-residue protein sequence, read N- to C-terminus: Recombination protein RecR (200 aa).

Residues 57–72 form a C4-type zinc finger; that stretch reads CRQCRTLTEEELCPQC. In terms of domain architecture, Toprim spans 80–175; it reads TLLCVVEGPM…ITSRIAHGVP (96 aa).

Belongs to the RecR family.

May play a role in DNA repair. It seems to be involved in an RecBC-independent recombinational process of DNA repair. It may act with RecF and RecO. This is Recombination protein RecR from Pseudomonas fluorescens (strain SBW25).